A 482-amino-acid chain; its full sequence is MLSLIIRRSRSRFIIHGIKISCNSLSAVDSSSSVLVSRRTFSSTPALSYFGFNYGKISNLNQRFGNYAYSGSSFASSTRSLSSEAVAVAATCDGLTVERIIANQWPILDENEGDWKSHAAAIAQSIQVIKRRLQWKKLLVRLKVLSAELNKSDLWDDPTHAGKISREHGSLTGKMKGVMTFERELLEHIDMLKLAKEENDSELESETLKALIDMRRVSKEKELEALLSADNDPCSCYIEVQAGAGGTESNDWAAMVMEMYKTWAQRRKFSVTVVDEAPGEIAGIKRATIKVNGEYAYGYAKAEVGVHRLVRISPFDSGKRRHTSFAAVAVIPILGDGSTRVEINDSDLRIERFRSGGAGGQHANTTDSAVRIVHIPTGITATCQNERSQHSNKASAMAVLQSRLDQLEMARQTAMNAQHTQSLTEISWGNQIRTYVLHPYRMVKDLRTNYEVSDPDSVLEGDLDGFILSFLSSSLDKDDPEH.

A chloroplast-targeting transit peptide spans 1 to 21 (MLSLIIRRSRSRFIIHGIKIS).

The protein belongs to the prokaryotic/mitochondrial release factor family.

It is found in the plastid. The protein resides in the chloroplast stroma. Its function is as follows. Directs the termination of translation in response to the peptide chain termination codon UGA. Required for the proper translation, stability and normal processing of UGA-containing polycistronic transcripts in chloroplasts. The sequence is that of Peptide chain release factor PrfB2, chloroplastic from Arabidopsis thaliana (Mouse-ear cress).